We begin with the raw amino-acid sequence, 504 residues long: FAD-dependent monooxygenase nsrK (504 aa).

Arginine 146 contacts FAD. Arginine 227 is a catalytic residue. FAD is bound by residues aspartate 340 and glycine 353.

This sequence belongs to the paxM FAD-dependent monooxygenase family. FAD is required as a cofactor.

The protein operates within secondary metabolite biosynthesis. Functionally, FAD-dependent monooxygenase; part of the gene cluster that mediates the biosynthesis of the tetrahydroxanthone dimer neosartorin, which exhibits antibacterial activity. The two different monomeric units appear to be synthesized by the same set of enzymes, among which the Baeyer-Villiger monooxygenase nsrF is the key enzyme for the divergence of the biosynthetic routes. The pathway begins with the synthesis of atrochrysone thioester by the polyketide synthase nsrB. The atrochrysone carboxyl ACP thioesterase nsrC then breaks the thioester bond and releases the atrochrysone carboxylic acid from AacuL. Atrochrysone carboxylic acid is decarboxylated by the decarboxylase nsrE, and oxidized by the anthrone oxygenase nsrD to yield emodin. Emodin is then reduced to emodin hydroquinone by the oxidoreductase nsrR. A-ring reduction by the short chain dehydrogenase nsrJ, dehydration by the scytalone dehydratase-like protein nsrI and probable spontaneous re-oxidation, results in overall deoxygenation to chrysophanol. The Baeyer-Villiger monooxygenase nsrF accepts chrysophanol as a substrate to insert one oxygen atom at two different positions to yield the precursors of both monomric units. NsrF is promiscuous/flexible in interacting with the 2 (non methylated and methylated) aromatic rings of chrysophanol, thus diverging the biosynthetic pathway at this point. After the hydrolysis of the lactones, methylesterification by the methyltransferase nsrG yields respectively moniliphenone and 2,2',6'-trihydroxy-4-methyl-6-methoxya-cyldiphenylmethanone. The next steps are the hydroxylation by the FAD-dependent monooxygenase nsrK, followed by isomerization by the monooxygenase nsrQ. The short chain dehydrogenase/reductase nsrO then catalyzes the C-5 ketoreduction to give the xanthone skeleton of blennolide C and 5-acetylblennolide A. The acetyltransferase nsrL has a strict substrate specificity and uses only blennolide A but not blennolide C to yield 5-acetylblennolide A as the single-acetylated product. In the final step of the biosynthesis, the heterodimerization of the 2 xanthones, blennolide C and 5-acetylblennolide A, is catalyzed by the cytochrome P450 monooxygenase nsrP. NsrP can utilize at least three different xanthones as its substrates to perform the dimerization reaction. In Aspergillus novofumigatus (strain IBT 16806), this protein is FAD-dependent monooxygenase nsrK.